Consider the following 176-residue polypeptide: Variant surface antigen A (176 aa).

The N-terminal stretch at 1 to 29 (MKKSIFSKKLLVSFGSLVALAAIPLIAIS) is a signal peptide. Cys30 is lipidated: N-palmitoyl cysteine. The S-diacylglycerol cysteine moiety is linked to residue Cys30. The disordered stretch occupies residues 33–176 (TDNNSSQSQQ…TKTENTQHTS (144 aa)). The segment covering 35 to 121 (NNSSQSQQPG…GSNSESGMNS (87 aa)) has biased composition (low complexity). Copy 1 of the repeat occupies 123-135 (KTENTQQSEAPGT). The 2.5 X 13 AA repeats stretch occupies residues 123–176 (KTENTQQSEAPGTNTGNKTTSESNSESGMNSEKTENTQQSEAPGTKTENTQHTS). A compositionally biased stretch (polar residues) spans 126–142 (NTQQSEAPGTNTGNKTT). The segment covering 143-153 (SESNSESGMNS) has biased composition (low complexity). Copy 2 of the repeat occupies 155 to 167 (KTENTQQSEAPGT). The span at 158–176 (NTQQSEAPGTKTENTQHTS) shows a compositional bias: polar residues. The stretch at 168-176 (KTENTQHTS) is one 3; truncated repeat.

It is found in the cell membrane. In terms of biological role, responsible for the antigenic diversity for host adaptation. This chain is Variant surface antigen A (vlpA), found in Mesomycoplasma hyorhinis (Mycoplasma hyorhinis).